We begin with the raw amino-acid sequence, 199 residues long: Rho-related protein racG (199 aa).

GTP contacts are provided by Ala13, Gly15, Lys16, Thr17, Cys18, Tyr32, and Thr35. Mg(2+) is bound at residue Thr17. 2 short sequence motifs (switch) span residues 26-37 and 57-75; these read NAFPNEYIPTVF and DTAG…YPST. Thr35 is a binding site for Mg(2+). GTP-binding residues include Lys116, Asp118, and Ala159. Cys196 bears the Cysteine methyl ester mark. Cys196 carries S-geranylgeranyl cysteine lipidation. A propeptide spans 197-199 (removed in mature form); the sequence is SLF.

The protein belongs to the small GTPase superfamily. Rho family. The cofactor is Mg(2+).

It localises to the cell membrane. The protein localises to the cytoplasm. Its subcellular location is the cytoskeleton. It carries out the reaction GTP + H2O = GDP + phosphate + H(+). With respect to regulation, regulated by guanine nucleotide exchange factors (GEFs) which promote the exchange of bound GDP for free GTP, GTPase activating proteins (GAPs) which increase the GTP hydrolysis activity, and GDP dissociation inhibitors which inhibit the dissociation of the nucleotide from the GTPase. Functionally, small GTPase which cycles between active GTP-bound and inactive GDP-bound states. Involved in actin cytoskeleton remodeling during capping of surface receptors and uroid formation. The chain is Rho-related protein racG from Entamoeba histolytica (strain ATCC 30459 / HM-1:IMSS / ABRM).